Here is a 100-residue protein sequence, read N- to C-terminus: Urease subunit gamma (100 aa).

The protein belongs to the urease gamma subunit family. In terms of assembly, heterotrimer of UreA (gamma), UreB (beta) and UreC (alpha) subunits. Three heterotrimers associate to form the active enzyme.

The protein localises to the cytoplasm. It carries out the reaction urea + 2 H2O + H(+) = hydrogencarbonate + 2 NH4(+). The protein operates within nitrogen metabolism; urea degradation; CO(2) and NH(3) from urea (urease route): step 1/1. The protein is Urease subunit gamma of Opitutus terrae (strain DSM 11246 / JCM 15787 / PB90-1).